A 218-amino-acid polypeptide reads, in one-letter code: Adenylate kinase (218 aa).

10-15 contributes to the ATP binding site; it reads GAGKGT. The interval 30 to 59 is NMP; the sequence is STGDMFRAAMANQTEMGRLAKSFIDKGELV. Residues T31, R36, 57-59, 86-89, and Q93 each bind AMP; these read ELV and GYPR. The LID stretch occupies residues 127–165; it reads GRFICRSCGSTYHKVFNPTKVEGTCDVCGGHEFFQREDD. R128 provides a ligand contact to ATP. C131 and C134 together coordinate Zn(2+). 137 to 138 contributes to the ATP binding site; it reads TY. 2 residues coordinate Zn(2+): C151 and C154. AMP contacts are provided by R162 and R173. Residue Q201 coordinates ATP.

Belongs to the adenylate kinase family. In terms of assembly, monomer.

The protein resides in the cytoplasm. The catalysed reaction is AMP + ATP = 2 ADP. The protein operates within purine metabolism; AMP biosynthesis via salvage pathway; AMP from ADP: step 1/1. Catalyzes the reversible transfer of the terminal phosphate group between ATP and AMP. Plays an important role in cellular energy homeostasis and in adenine nucleotide metabolism. The chain is Adenylate kinase from Streptococcus thermophilus (strain CNRZ 1066).